A 206-amino-acid polypeptide reads, in one-letter code: Orotate phosphoribosyltransferase (206 aa).

5-phospho-alpha-D-ribose 1-diphosphate is bound by residues Arg-114, Lys-115, Lys-118, His-120, and 141-149 (EDVVTTGQS). Orotate contacts are provided by Thr-145 and Arg-173.

This sequence belongs to the purine/pyrimidine phosphoribosyltransferase family. PyrE subfamily. As to quaternary structure, homodimer. Mg(2+) serves as cofactor.

The enzyme catalyses orotidine 5'-phosphate + diphosphate = orotate + 5-phospho-alpha-D-ribose 1-diphosphate. The protein operates within pyrimidine metabolism; UMP biosynthesis via de novo pathway; UMP from orotate: step 1/2. Functionally, catalyzes the transfer of a ribosyl phosphate group from 5-phosphoribose 1-diphosphate to orotate, leading to the formation of orotidine monophosphate (OMP). This is Orotate phosphoribosyltransferase from Nostoc sp. (strain PCC 7120 / SAG 25.82 / UTEX 2576).